A 212-amino-acid polypeptide reads, in one-letter code: Large ribosomal subunit protein uL3 (212 aa).

An N5-methylglutamine modification is found at Q153.

It belongs to the universal ribosomal protein uL3 family. Part of the 50S ribosomal subunit. Forms a cluster with proteins L14 and L19. Post-translationally, methylated by PrmB.

Functionally, one of the primary rRNA binding proteins, it binds directly near the 3'-end of the 23S rRNA, where it nucleates assembly of the 50S subunit. This chain is Large ribosomal subunit protein uL3, found in Shewanella pealeana (strain ATCC 700345 / ANG-SQ1).